The following is a 374-amino-acid chain: F-box/kelch-repeat protein At2g24250 (374 aa).

One can recognise an F-box domain in the interval 14–63 (PDWSQLPEELLHIISTHLEDHYFDAVHARSVCRSWRSTFPFPSSLLRQSY). 2 Kelch repeats span residues 100-150 (SEYF…PLGH) and 249-301 (NFLV…LGNF).

The protein is F-box/kelch-repeat protein At2g24250 of Arabidopsis thaliana (Mouse-ear cress).